We begin with the raw amino-acid sequence, 168 residues long: Urease accessory protein UreE (168 aa).

Residues 145 to 168 (EGGAYAAGQGGGHGPHGQHTHPHH) are disordered.

This sequence belongs to the UreE family.

Its subcellular location is the cytoplasm. Involved in urease metallocenter assembly. Binds nickel. Probably functions as a nickel donor during metallocenter assembly. The polypeptide is Urease accessory protein UreE (Verminephrobacter eiseniae (strain EF01-2)).